The sequence spans 91 residues: Acylphosphatase (91 aa).

An Acylphosphatase-like domain is found at 6–91 (CMRCYISGRV…WEDYISFDVL (86 aa)). Active-site residues include arginine 21 and asparagine 39.

It belongs to the acylphosphatase family.

It carries out the reaction an acyl phosphate + H2O = a carboxylate + phosphate + H(+). This chain is Acylphosphatase (acyP), found in Legionella pneumophila subsp. pneumophila (strain Philadelphia 1 / ATCC 33152 / DSM 7513).